Here is a 640-residue protein sequence, read N- to C-terminus: Calpain-5 (640 aa).

The region spanning 26–343 (LFEDPHFPAS…FTDIIKCRLI (318 aa)) is the Calpain catalytic domain. Active-site residues include Cys-81, His-252, and Asn-284. The segment at 344–496 (NTSYLSIHKT…VFTDVPSNCR (153 aa)) is domain III. The C2 domain occupies 499–617 (RLDEPPRTCW…HSLHLQDRSG (119 aa)).

It belongs to the peptidase C2 family.

Calcium-regulated non-lysosomal thiol-protease. The protein is Calpain-5 (Capn5) of Rattus norvegicus (Rat).